A 221-amino-acid polypeptide reads, in one-letter code: MDDELTLLPREKMLSFGITSLTDAELLALFLRTGTSGKSVFVLAQELLQHFGSLHGLLNANLDEFRYVEGIGLAKYAQLKGIAELARRYHSVRVLGDNPLLSPEMTKDFLQSQLSDAEREVFMVIFLDNQHRVVKHSRMFSGTLRHVEVHPREIVREAIKVNAAAVILAHNHPSGCAEPSKADKDITERIIKCCQFMDIHVLDHFIIGRGEYVSFAEQGWI.

The MPN domain maps to 99–221 (PLLSPEMTKD…YVSFAEQGWI (123 aa)). Residues H170, H172, and D183 each coordinate Zn(2+). The JAMM motif signature appears at 170–183 (HNHPSGCAEPSKAD).

It belongs to the UPF0758 family. YicR subfamily.

This chain is UPF0758 protein Ent638_0101, found in Enterobacter sp. (strain 638).